The chain runs to 133 residues: Putative pre-16S rRNA nuclease (133 aa).

This sequence belongs to the YqgF nuclease family.

It localises to the cytoplasm. Functionally, could be a nuclease involved in processing of the 5'-end of pre-16S rRNA. The chain is Putative pre-16S rRNA nuclease from Bordetella pertussis (strain Tohama I / ATCC BAA-589 / NCTC 13251).